A 283-amino-acid polypeptide reads, in one-letter code: Phosphatidylserine decarboxylase proenzyme (283 aa).

Active-site charge relay system; for autoendoproteolytic cleavage activity residues include Asp96, His152, and Ser250. Ser250 functions as the Schiff-base intermediate with substrate; via pyruvic acid; for decarboxylase activity in the catalytic mechanism. Residue Ser250 is modified to Pyruvic acid (Ser); by autocatalysis.

The protein belongs to the phosphatidylserine decarboxylase family. PSD-B subfamily. Prokaryotic type I sub-subfamily. In terms of assembly, heterodimer of a large membrane-associated beta subunit and a small pyruvoyl-containing alpha subunit. Requires pyruvate as cofactor. Is synthesized initially as an inactive proenzyme. Formation of the active enzyme involves a self-maturation process in which the active site pyruvoyl group is generated from an internal serine residue via an autocatalytic post-translational modification. Two non-identical subunits are generated from the proenzyme in this reaction, and the pyruvate is formed at the N-terminus of the alpha chain, which is derived from the carboxyl end of the proenzyme. The autoendoproteolytic cleavage occurs by a canonical serine protease mechanism, in which the side chain hydroxyl group of the serine supplies its oxygen atom to form the C-terminus of the beta chain, while the remainder of the serine residue undergoes an oxidative deamination to produce ammonia and the pyruvoyl prosthetic group on the alpha chain. During this reaction, the Ser that is part of the protease active site of the proenzyme becomes the pyruvoyl prosthetic group, which constitutes an essential element of the active site of the mature decarboxylase.

It localises to the cell membrane. It catalyses the reaction a 1,2-diacyl-sn-glycero-3-phospho-L-serine + H(+) = a 1,2-diacyl-sn-glycero-3-phosphoethanolamine + CO2. The protein operates within phospholipid metabolism; phosphatidylethanolamine biosynthesis; phosphatidylethanolamine from CDP-diacylglycerol: step 2/2. Catalyzes the formation of phosphatidylethanolamine (PtdEtn) from phosphatidylserine (PtdSer). The polypeptide is Phosphatidylserine decarboxylase proenzyme (Acinetobacter baumannii (strain SDF)).